A 207-amino-acid polypeptide reads, in one-letter code: Large ribosomal subunit protein uL4 (207 aa).

The tract at residues 55–75 (SAVRGGGRKPWRQKGTGRARQ) is disordered. Over residues 60-71 (GGRKPWRQKGTG) the composition is skewed to basic residues.

The protein belongs to the universal ribosomal protein uL4 family. In terms of assembly, part of the 50S ribosomal subunit.

Functionally, one of the primary rRNA binding proteins, this protein initially binds near the 5'-end of the 23S rRNA. It is important during the early stages of 50S assembly. It makes multiple contacts with different domains of the 23S rRNA in the assembled 50S subunit and ribosome. In terms of biological role, forms part of the polypeptide exit tunnel. The protein is Large ribosomal subunit protein uL4 of Staphylococcus epidermidis (strain ATCC 35984 / DSM 28319 / BCRC 17069 / CCUG 31568 / BM 3577 / RP62A).